Here is a 676-residue protein sequence, read N- to C-terminus: Urocanate hydratase (676 aa).

Residues 126-127, Gln-204, 251-253, Glu-271, 317-318, 343-347, 354-355, and Tyr-403 each bind NAD(+); these read GG, GMS, NV, QTSCH, and YY. Lys-534 carries the post-translational modification N6-succinyllysine. Gly-594 lines the NAD(+) pocket.

This sequence belongs to the urocanase family. The cofactor is NAD(+).

It carries out the reaction 4-imidazolone-5-propanoate = trans-urocanate + H2O. It functions in the pathway amino-acid degradation; L-histidine degradation into L-glutamate; N-formimidoyl-L-glutamate from L-histidine: step 2/3. The sequence is that of Urocanate hydratase (Uroc1) from Mus musculus (Mouse).